The following is a 32-amino-acid chain: Delta-conotoxin-like MVID (32 aa).

3 disulfide bridges follow: cysteine 3-cysteine 18, cysteine 10-cysteine 22, and cysteine 17-cysteine 27. Position 14 is a 4-hydroxyproline (proline 14).

It belongs to the conotoxin O1 superfamily. In terms of tissue distribution, expressed by the venom duct.

It is found in the secreted. In terms of biological role, delta-conotoxins bind to site 6 of voltage-gated sodium channels (Nav) and inhibit the inactivation process. The chain is Delta-conotoxin-like MVID from Conus magus (Magical cone).